Consider the following 546-residue polypeptide: Chaperonin GroEL (546 aa).

ATP contacts are provided by residues 30–33 (TLGP), Lys-51, 87–91 (DGTTT), Gly-415, 479–481 (NAA), and Asp-495.

This sequence belongs to the chaperonin (HSP60) family. In terms of assembly, forms a cylinder of 14 subunits composed of two heptameric rings stacked back-to-back. Interacts with the co-chaperonin GroES.

The protein localises to the cytoplasm. The catalysed reaction is ATP + H2O + a folded polypeptide = ADP + phosphate + an unfolded polypeptide.. In terms of biological role, together with its co-chaperonin GroES, plays an essential role in assisting protein folding. The GroEL-GroES system forms a nano-cage that allows encapsulation of the non-native substrate proteins and provides a physical environment optimized to promote and accelerate protein folding. This chain is Chaperonin GroEL, found in Pseudomonas entomophila (strain L48).